Reading from the N-terminus, the 252-residue chain is uncharacterized protein (252 aa).

NADP(+) is bound at residue 16-40 (LVTGASDGIGREAAMTYARYGATVI). S152 lines the substrate pocket. Y165 serves as the catalytic Proton acceptor.

Belongs to the short-chain dehydrogenases/reductases (SDR) family.

This is an uncharacterized protein from Escherichia coli (strain K12).